The primary structure comprises 253 residues: Imidazole glycerol phosphate synthase subunit HisF (253 aa).

Catalysis depends on residues aspartate 11 and aspartate 130.

The protein belongs to the HisA/HisF family. Heterodimer of HisH and HisF.

Its subcellular location is the cytoplasm. It carries out the reaction 5-[(5-phospho-1-deoxy-D-ribulos-1-ylimino)methylamino]-1-(5-phospho-beta-D-ribosyl)imidazole-4-carboxamide + L-glutamine = D-erythro-1-(imidazol-4-yl)glycerol 3-phosphate + 5-amino-1-(5-phospho-beta-D-ribosyl)imidazole-4-carboxamide + L-glutamate + H(+). Its pathway is amino-acid biosynthesis; L-histidine biosynthesis; L-histidine from 5-phospho-alpha-D-ribose 1-diphosphate: step 5/9. IGPS catalyzes the conversion of PRFAR and glutamine to IGP, AICAR and glutamate. The HisF subunit catalyzes the cyclization activity that produces IGP and AICAR from PRFAR using the ammonia provided by the HisH subunit. This chain is Imidazole glycerol phosphate synthase subunit HisF, found in Roseobacter denitrificans (strain ATCC 33942 / OCh 114) (Erythrobacter sp. (strain OCh 114)).